The primary structure comprises 605 residues: METDIVINLRCKLKEAEEERLKAAQYGLQLVESQNELQNQLDKCRNEMMTMTESYEQEKYTLQREVELKSRMLESLSCECEAIKQQQKMHLEKLEEQLSRSHGQEVNELKSKIEKLKVELDEARLSEKQLKHQVDHQKELLSCKSEELRVMSERVQESMSSEMLALQIELTEMESMKTTLKEEVNELQYRQEQLELLITNLMRQVDRLKEEKEEREKEAVSYYNALEKARVANQDLQVQLDQALQQALDPNSKGNSLFAEVEDRRAAMERQLISMKVKYQSLKKQNVFNREQMQRMKLQIATLLQMKGSQTEFEQQERLLAMLEQKNGEIKHLLGEIRNLEKFKNLYESMESKPSVDSGALEDNTYYTDLLQMKLDNLNKEIESTKGELSIQRMKALFESQRALDIERKLFANERCLQLSESENMKLRAKLDELKLKYEPEETVEVPVLKKRREVLPVDITTSKDTCVNNSAVGGEVYRLPPQKEETQCCPNSLEDNNLQLEKSVSIHTPIVSLSPHKNLPVDMQLKKEKKCVKLVGVPADAEALSERSGNTLNSPRLAAESKLQTEVKEGKETASKLEKETCKKSHPILYVSSKSTPETQCPQQ.

Methionine 1 carries the post-translational modification N-acetylmethionine. Residues 3-442 are a coiled coil; it reads TDIVINLRCK…ELKLKYEPEE (440 aa). Serine 513, serine 515, and serine 555 each carry phosphoserine. Residues 545-581 are disordered; that stretch reads LSERSGNTLNSPRLAAESKLQTEVKEGKETASKLEKE. Residues 564-581 are compositionally biased toward basic and acidic residues; it reads LQTEVKEGKETASKLEKE.

The protein belongs to the Spindly family. In terms of assembly, interacts with KNTC1 and ZW10. These interactions appear weak and may be transient or indirect. Interacts with dynein intermediate chain and dynactin (DCTN1). Interacts with the catalytically active form of USP45. Monoubiquitinated with'Lys-48' linkage. Deubiquitinated by USP45.

It localises to the cytoplasm. The protein resides in the cytoskeleton. The protein localises to the microtubule organizing center. It is found in the centrosome. Its subcellular location is the chromosome. It localises to the centromere. The protein resides in the kinetochore. The protein localises to the nucleus. It is found in the spindle pole. In terms of biological role, required for the localization of dynein and dynactin to the mitotic kintochore. Dynein is believed to control the initial lateral interaction between the kinetochore and spindle microtubules and to facilitate the subsequent formation of end-on kinetochore-microtubule attachments mediated by the NDC80 complex. Also required for correct spindle orientation. Does not appear to be required for the removal of spindle assembly checkpoint (SAC) proteins from the kinetochore upon bipolar spindle attachment. Acts as an adapter protein linking the dynein motor complex to various cargos and converts dynein from a non-processive to a highly processive motor in the presence of dynactin. Facilitates the interaction between dynein and dynactin and activates dynein processivity (the ability to move along a microtubule for a long distance without falling off the track). Plays a role in cell migration. In Macaca fascicularis (Crab-eating macaque), this protein is Protein Spindly.